Consider the following 629-residue polypeptide: Arginine--tRNA ligase (629 aa).

Positions 128 to 138 (VNPTKPLHMGH) match the 'HIGH' region motif.

This sequence belongs to the class-I aminoacyl-tRNA synthetase family.

Its subcellular location is the cytoplasm. The catalysed reaction is tRNA(Arg) + L-arginine + ATP = L-arginyl-tRNA(Arg) + AMP + diphosphate. This is Arginine--tRNA ligase from Pyrococcus furiosus (strain ATCC 43587 / DSM 3638 / JCM 8422 / Vc1).